The primary structure comprises 73 residues: Heterin-2 (73 aa).

The signal sequence occupies residues 1-22 (MQYKTFLVIFLAYLLVTEEALA). The propeptide occupies 47 to 73 (KRALKNIFDPYQKNLDLELERLLSQLQ).

Belongs to the non-disulfide-bridged peptide (NDBP) superfamily. Medium-length antimicrobial peptide (group 3) family. As to expression, expressed by the venom gland.

It is found in the secreted. The protein resides in the target cell membrane. Amphipathic peptide with potent activities against Gram-positive bacteria (MIC=5.6-30.0 uM) and weaker activities against the tested Gram-negative bacteria (MIC=15 uM to &gt;45 uM). It has high hemolytic activity against human erythrocytes. May act by disrupting the integrity of the bacterial cell membrane. This chain is Heterin-2, found in Heterometrus spinifer (Asia giant forest scorpion).